The chain runs to 431 residues: Chaperone SurA (431 aa).

Positions 1–20 are cleaved as a signal peptide; it reads MKNWRTLILGLALSASTAFA. 2 consecutive PpiC domains span residues 171–272 and 282–382; these read NDEL…KVND and VTET…QLLD.

It is found in the periplasm. The enzyme catalyses [protein]-peptidylproline (omega=180) = [protein]-peptidylproline (omega=0). Functionally, chaperone involved in the correct folding and assembly of outer membrane proteins. Recognizes specific patterns of aromatic residues and the orientation of their side chains, which are found more frequently in integral outer membrane proteins. May act in both early periplasmic and late outer membrane-associated steps of protein maturation. This chain is Chaperone SurA, found in Pectobacterium atrosepticum (strain SCRI 1043 / ATCC BAA-672) (Erwinia carotovora subsp. atroseptica).